The chain runs to 778 residues: DISP complex protein LRCH3 (778 aa).

LRR repeat units lie at residues 56-79 (AAVTGVLSLSGRKLREFPRGAANH), 81-104 (LTDTTRADLSRNRLSEIPMEACHF), 105-127 (VSLESLNLYQNCIRYIPEAVLNL), 128-150 (QALTFLNISRNQLSTLPVHLCNL), 152-172 (LKVLIASNNKLVSLPEEIGHL), 173-195 (RHLTELDVSCNEIQTVPSQIGNL), 197-218 (ALRDFNVRRNHLLRLPEELAEV), 220-239 (LIRLDFSCNKITVIPVCYRN), 240-264 (LRHLQVITLDNNPLQSPPAQICIKG), and 266-290 (IHIFKYLNIQACKIAPDLPDYERRP). The mediates interaction with DOCK7 stretch occupies residues 56–290 (AAVTGVLSLS…PDLPDYERRP (235 aa)). S324, S415, and S419 each carry phosphoserine. A mediates direct interaction with MYO6 region spans residues 382–642 (TTEEEENDVK…PATDPTDAIT (261 aa)). Positions 511 to 536 (QKASHNPQRQQPPGNGECSFPSRRSQ) are disordered. Residues 514–523 (SHNPQRQQPP) are compositionally biased toward polar residues. Phosphoserine is present on residues S608 and S625. The Calponin-homology (CH) domain maps to 645–758 (REEELKLIDQ…VTVQALLELA (114 aa)). The disordered stretch occupies residues 758–778 (APPKQPPPQQPQQQQPQLSAV). A compositionally biased stretch (low complexity) spans 768 to 778 (PQQQQPQLSAV).

In terms of assembly, component of the DOCK7-induced septin displacement/DISP complex, at least composed of DOCK7, LRCH3 and MYO6.

The protein localises to the cytoplasm. Functionally, as part of the DISP complex, may regulate the association of septins with actin and thereby regulate the actin cytoskeleton. This is DISP complex protein LRCH3 from Mus musculus (Mouse).